Reading from the N-terminus, the 188-residue chain is UPF0398 protein SE_1135 (188 aa).

Belongs to the UPF0398 family.

The polypeptide is UPF0398 protein SE_1135 (Staphylococcus epidermidis (strain ATCC 12228 / FDA PCI 1200)).